Consider the following 195-residue polypeptide: Probable GTP-binding protein EngB (195 aa).

Positions 24–195 (DIPEIALAGR…AAWDAILSKI (172 aa)) constitute an EngB-type G domain. GTP contacts are provided by residues 32 to 39 (GRSNVGKS), 59 to 63 (GKTQL), 77 to 80 (DVPG), 144 to 147 (TKAD), and 176 to 178 (FSS). Mg(2+) contacts are provided by Ser39 and Thr61.

Belongs to the TRAFAC class TrmE-Era-EngA-EngB-Septin-like GTPase superfamily. EngB GTPase family. Mg(2+) is required as a cofactor.

Functionally, necessary for normal cell division and for the maintenance of normal septation. The protein is Probable GTP-binding protein EngB of Streptococcus sanguinis (strain SK36).